Consider the following 484-residue polypeptide: UDP-N-acetylmuramoyl-L-alanyl-D-glutamate--L-lysine ligase (484 aa).

Position 43 (Ser43) interacts with UDP-N-acetyl-alpha-D-muramoyl-L-alanyl-D-glutamate. 119-125 (GTKGKTT) contacts ATP. Residues 161–162 (TT), Ser188, and Arg196 contribute to the UDP-N-acetyl-alpha-D-muramoyl-L-alanyl-D-glutamate site. Residue Lys230 is modified to N6-carboxylysine. The short motif at 405–408 (DDPN) is the L-lysine recognition motif element.

This sequence belongs to the MurCDEF family. MurE subfamily. In terms of processing, carboxylation is probably crucial for Mg(2+) binding and, consequently, for the gamma-phosphate positioning of ATP.

It localises to the cytoplasm. The enzyme catalyses UDP-N-acetyl-alpha-D-muramoyl-L-alanyl-D-glutamate + L-lysine + ATP = UDP-N-acetyl-alpha-D-muramoyl-L-alanyl-gamma-D-glutamyl-L-lysine + ADP + phosphate + H(+). Its pathway is cell wall biogenesis; peptidoglycan biosynthesis. In terms of biological role, catalyzes the addition of L-lysine to the nucleotide precursor UDP-N-acetylmuramoyl-L-alanyl-D-glutamate (UMAG) in the biosynthesis of bacterial cell-wall peptidoglycan. This Streptococcus agalactiae serotype Ia (strain ATCC 27591 / A909 / CDC SS700) protein is UDP-N-acetylmuramoyl-L-alanyl-D-glutamate--L-lysine ligase.